Reading from the N-terminus, the 101-residue chain is NADH-quinone oxidoreductase subunit K (101 aa).

Helical transmembrane passes span 4 to 24, 30 to 50, and 61 to 81; these read LAHY…GIFL, IIIL…FVAF, and IFVF…LAIL.

This sequence belongs to the complex I subunit 4L family. As to quaternary structure, NDH-1 is composed of 14 different subunits. Subunits NuoA, H, J, K, L, M, N constitute the membrane sector of the complex.

It localises to the cell inner membrane. It catalyses the reaction a quinone + NADH + 5 H(+)(in) = a quinol + NAD(+) + 4 H(+)(out). In terms of biological role, NDH-1 shuttles electrons from NADH, via FMN and iron-sulfur (Fe-S) centers, to quinones in the respiratory chain. The immediate electron acceptor for the enzyme in this species is believed to be ubiquinone. Couples the redox reaction to proton translocation (for every two electrons transferred, four hydrogen ions are translocated across the cytoplasmic membrane), and thus conserves the redox energy in a proton gradient. The protein is NADH-quinone oxidoreductase subunit K of Paraburkholderia phymatum (strain DSM 17167 / CIP 108236 / LMG 21445 / STM815) (Burkholderia phymatum).